A 1074-amino-acid chain; its full sequence is Semaphorin-5A (1074 aa).

The signal sequence occupies residues 1 to 22; the sequence is MKGTCVIAWLFSSLGLWRLAHP. Residues 23–968 lie on the Extracellular side of the membrane; it reads EAQGTTQCQR…EEKRCGEFNM (946 aa). A Sema domain is found at 35–484; it reads HPVISYKEIG…LREHVVKIPL (450 aa). Cystine bridges form between Cys-104–Cys-114 and Cys-131–Cys-140. Asn-142, Asn-168, Asn-227, and Asn-277 each carry an N-linked (GlcNAc...) asparagine glycan. 2 disulfides stabilise this stretch: Cys-254–Cys-357 and Cys-278–Cys-320. Asn-323, Asn-367, and Asn-437 each carry an N-linked (GlcNAc...) asparagine glycan. Cystine bridges form between Cys-487–Cys-504 and Cys-496–Cys-513. N-linked (GlcNAc...) asparagine glycosylation is found at Asn-536 and Asn-591. 7 TSP type-1 domains span residues 540 to 593, 595 to 651, 653 to 702, 707 to 765, 784 to 839, 841 to 896, and 897 to 944; these read DGHF…ANCS, NGGW…LLCP, HMFW…NPCP, TTPW…GCST, NGAW…LPCP, DGVW…QPCP, and ESWS…VFDS. 6 disulfide bridges follow: Cys-607–Cys-644, Cys-611–Cys-650, Cys-622–Cys-634, Cys-665–Cys-696, Cys-669–Cys-701, and Cys-680–Cys-686. N-linked (GlcNAc...) asparagine glycosylation occurs at Asn-717. 6 disulfide bridges follow: Cys-796/Cys-833, Cys-800/Cys-838, Cys-811/Cys-823, Cys-853/Cys-890, Cys-857/Cys-895, and Cys-868/Cys-880. The N-linked (GlcNAc...) asparagine glycan is linked to Asn-933. Residues 969–989 traverse the membrane as a helical segment; the sequence is FHMIAVGLSSSILGCLLTLLV. Topologically, residues 990–1074 are cytoplasmic; the sequence is YTYCQRYQQQ…FTDLNNYDEY (85 aa).

The protein belongs to the semaphorin family. Binds PLXNB3.

The protein resides in the membrane. Its function is as follows. Bifunctional axonal guidance cue regulated by sulfated proteoglycans; attractive effects result from interactions with heparan sulfate proteoglycans (HSPGs), while the inhibitory effects depend on interactions with chondroitin sulfate proteoglycans (CSPGs). Ligand for receptor PLXNB3. In glioma cells, SEMA5A stimulation of PLXNB3 results in the disassembly of F-actin stress fibers, disruption of focal adhesions and cellular collapse as well as inhibition of cell migration and invasion through ARHGDIA-mediated inactivation of RAC1. May promote angiogenesis by increasing endothelial cell proliferation and migration and inhibiting apoptosis. This is Semaphorin-5A (SEMA5A) from Homo sapiens (Human).